A 199-amino-acid polypeptide reads, in one-letter code: Octanoyltransferase (199 aa).

The BPL/LPL catalytic domain maps to Ser-27–Lys-199. Residues Arg-66–His-73, Ser-133–Gly-135, and Gly-146–Ala-148 each bind substrate. The active-site Acyl-thioester intermediate is Cys-164.

It belongs to the LipB family.

The protein localises to the cytoplasm. The enzyme catalyses octanoyl-[ACP] + L-lysyl-[protein] = N(6)-octanoyl-L-lysyl-[protein] + holo-[ACP] + H(+). It participates in protein modification; protein lipoylation via endogenous pathway; protein N(6)-(lipoyl)lysine from octanoyl-[acyl-carrier-protein]: step 1/2. Its function is as follows. Catalyzes the transfer of endogenously produced octanoic acid from octanoyl-acyl-carrier-protein onto the lipoyl domains of lipoate-dependent enzymes. Lipoyl-ACP can also act as a substrate although octanoyl-ACP is likely to be the physiological substrate. The polypeptide is Octanoyltransferase (Legionella pneumophila (strain Paris)).